We begin with the raw amino-acid sequence, 249 residues long: Spindlin-4 (249 aa).

Tudor-like domain regions lie at residues 41–90, 119–168, and 201–246; these read VGCR…LELH, VGKA…YTLL, and VGKQ…YGLV. Histone H3K4me3 and H3R8me2a binding regions lie at residues 80–85, glutamate 128, and 237–239; these read GKDSVY and DIH.

It belongs to the SPIN/STSY family. Interacts with C11orf84/SPINDOC. Associates with chromatin.

The protein resides in the cytoplasm. Its subcellular location is the nucleus. Binds to acetylated and methylated histones, including H3K4me3 and H4K20me3, probably acting as a histone reader that recognizes chromatin marks to mediate downstream cellular effects. Promotes canonical WNT signaling, and is involved in the down-regulation of cell proliferation. The polypeptide is Spindlin-4 (Spin4) (Mus musculus (Mouse)).